Consider the following 240-residue polypeptide: FMN-dependent NADH:quinone oxidoreductase 2 (240 aa).

Residues S10 and 23–25 (SIS) contribute to the FMN site.

The protein belongs to the azoreductase type 1 family. As to quaternary structure, homodimer. FMN is required as a cofactor.

The enzyme catalyses 2 a quinone + NADH + H(+) = 2 a 1,4-benzosemiquinone + NAD(+). It carries out the reaction N,N-dimethyl-1,4-phenylenediamine + anthranilate + 2 NAD(+) = 2-(4-dimethylaminophenyl)diazenylbenzoate + 2 NADH + 2 H(+). In terms of biological role, quinone reductase that provides resistance to thiol-specific stress caused by electrophilic quinones. Also exhibits azoreductase activity. Catalyzes the reductive cleavage of the azo bond in aromatic azo compounds to the corresponding amines. The chain is FMN-dependent NADH:quinone oxidoreductase 2 from Idiomarina loihiensis (strain ATCC BAA-735 / DSM 15497 / L2-TR).